The chain runs to 26 residues: Turripeptide OL49 (26 aa).

Post-translationally, contains 3 disulfide bonds. Expressed by the venom duct.

Its subcellular location is the secreted. In terms of biological role, acts as a neurotoxin by inhibiting an ion channel. The sequence is that of Turripeptide OL49 from Iotyrris olangoensis (Sea snail).